The sequence spans 297 residues: MHTPVLLKEMLEILDPQDGKIYVDATFGAGGYTKAILNAANCKVCAIDQDKHTSIFYEELANNFPNRIHFFINKFSQIKQVLLGAQLERVDGVVFDIGVSSMQLDDANRGFSFSKNGPLDMRMSTSNSIDASVFVNTVSEEEIANIIYQYGGEKYSRKIAKAIINFRKKKVIETTGELASIVRSVVSRSKNHDINPATRTFQAIRIWVNKELQELEQGIMCAADLLNPGGKIIVVSFHSLEDRIVKMIFKSLCSDEISLKLNTGFQLINKKIVRPSFEEILNNPRSRSAKLRAILKI.

Residues 30 to 32 (GGY), Asp-48, Phe-75, Asp-96, and Gln-103 each bind S-adenosyl-L-methionine.

The protein belongs to the methyltransferase superfamily. RsmH family.

It is found in the cytoplasm. The catalysed reaction is cytidine(1402) in 16S rRNA + S-adenosyl-L-methionine = N(4)-methylcytidine(1402) in 16S rRNA + S-adenosyl-L-homocysteine + H(+). Specifically methylates the N4 position of cytidine in position 1402 (C1402) of 16S rRNA. This Ehrlichia canis (strain Jake) protein is Ribosomal RNA small subunit methyltransferase H.